We begin with the raw amino-acid sequence, 391 residues long: Putative gustatory receptor 36a (391 aa).

At 1–3 (MFD) the chain is on the cytoplasmic side. Residues 4 to 24 (WVGLLLKVLYYYGQIIGLINF) traverse the membrane as a helical segment. Residues 25-38 (EIDWQRGRVVAAQR) are Extracellular-facing. Residues 39 to 59 (GILFAIAINVLICMVLLLQIS) traverse the membrane as a helical segment. The Cytoplasmic segment spans residues 60–73 (KKFNLDVYFGRANQ). Residues 74–94 (LHQYVIIVMVSLRMASGISAI) form a helical membrane-spanning segment. Residues 95–126 (LNRWRQRAQLMRLVECVLRLFLKKPHVKQMSR) lie on the Extracellular side of the membrane. A helical transmembrane segment spans residues 127–147 (WAILVKFSVGVVSNFLQMAIS). Over 148-165 (MESLDRLGFNEFVGMASD) the chain is Cytoplasmic. The helical transmembrane segment at 166 to 186 (FWMSAIINMAISQHYLVILFV) threads the bilayer. At 187–247 (RAYYHLLKTE…LQSIVTQLNQ (61 aa)) the chain is on the extracellular side. Residues 248–268 (VFGIQGIMVYGGYYIFSVATT) form a helical membrane-spanning segment. Residues 269–290 (YITYSLAINGIEELHLSVRAAA) are Cytoplasmic-facing. The chain crosses the membrane as a helical span at residues 291–311 (LVFSWFLFYYTSAILNLFVML). Over 312–391 (KLFDDHKEME…FLIQYDMEYF (80 aa)) the chain is Extracellular.

It belongs to the insect chemoreceptor superfamily. Gustatory receptor (GR) family. Gr22e subfamily.

The protein resides in the cell membrane. Functionally, probable gustatory receptor which mediates acceptance or avoidance behavior, depending on its substrates. The protein is Putative gustatory receptor 36a (Gr36a) of Drosophila melanogaster (Fruit fly).